Here is a 382-residue protein sequence, read N- to C-terminus: uncharacterized protein (382 aa).

12 helical membrane-spanning segments follow: residues 14 to 34 (GLLL…LWLA), 45 to 65 (VVSS…GYVI), 79 to 99 (FIFA…SWLA), 102 to 122 (FVAG…LMCS), 131 to 151 (LLAA…LLVS), 157 to 177 (LMSV…PLLF), 204 to 224 (LGVN…GLMP), 235 to 255 (ASIG…QWPI), 270 to 290 (VQVF…AMAP), 291 to 311 (ALFI…AWAC), 325 to 345 (ALLL…AMLM), and 348 to 368 (FSDN…LLML).

It belongs to the major facilitator superfamily. YcaD (TC 2.A.1.26) family.

It localises to the cell inner membrane. This is an uncharacterized protein from Escherichia coli O7:K1 (strain IAI39 / ExPEC).